We begin with the raw amino-acid sequence, 277 residues long: Protein CMSS1 (277 aa).

The span at 1–14 shows a compositional bias: acidic residues; that stretch reads MADDLGNEWWEEPA. The tract at residues 1-91 is disordered; sequence MADDLGNEWW…QHAPTAGTPE (91 aa). Basic and acidic residues predominate over residues 24-34; sequence EEVKESEESKG. A compositionally biased stretch (basic residues) spans 35–52; the sequence is NKKKKIPSGKTQVKRKKE. Residues 53–66 are compositionally biased toward basic and acidic residues; the sequence is VKVSQEAEKEDSAP.

It belongs to the CMS1 family.

In Xenopus laevis (African clawed frog), this protein is Protein CMSS1 (cmss1).